Reading from the N-terminus, the 74-residue chain is Protein krueppel (74 aa).

4 C2H2-type zinc fingers span residues 1–4, 10–32, 38–60, and 66–74; these read ERTH, FECP…MRLH, YHCS…LRVH, and YACELCAAK.

It belongs to the krueppel C2H2-type zinc-finger protein family.

Its subcellular location is the nucleus. Functionally, krueppel is a gap class segmentation protein. The chain is Protein krueppel (Kr) from Apis mellifera (Honeybee).